The chain runs to 276 residues: Checkpoint protein HUS1B (276 aa).

It belongs to the HUS1 family. As to quaternary structure, interacts with RAD1 and RAD9B.

In Mus musculus (Mouse), this protein is Checkpoint protein HUS1B (Hus1b).